A 206-amino-acid polypeptide reads, in one-letter code: MLNAAAADRNKDPILSVLKSRVASNRRLFALEISSGTGQHVVHFAKAFPNITWQPSEVETQSLSSIEAYRQYHRLQNVQPPIYLDVSQSWQTWGGFPAESCDLIININMMHISPLACTTGLFHGVGQILKPQGLLLTYGPYAFNGSIVPQSNFDFDQSLRYRNPEWGLRDASFLTTLGQENGLRLEEIVDMPANNKCLLFRKDSVV.

Belongs to the UPF0585 family.

The polypeptide is Methyltransferase-like 26 (Danio rerio (Zebrafish)).